A 2146-amino-acid chain; its full sequence is YLP motif-containing protein 1 (2146 aa).

Disordered stretches follow at residues 1-381 (MYPN…ARLK) and 562-880 (PPVM…FKMQ). Positions 14-26 (YPPPPVPPPPPVA) are enriched in pro residues. 2 stretches are compositionally biased toward low complexity: residues 27–48 (LPEASPGPGYSSSTTPAAPSSS) and 58–79 (LAQLQQLQQMHQKQMQCVLQPH). Pro residues-rich tracts occupy residues 80-92 (HLPPPPLPPPPVM), 101-113 (QPPPPPMPPPPGP), 147-157 (PESPPVPPGSY), 165-175 (MPPPQPPPSYY), and 183-194 (YLPPAQPSPSQS). Over residues 195-237 (PPSQSYLAPTPSYSSSSSSSQSYLSHSQSYLPSSQASPSRPSQ) the composition is skewed to low complexity. Polar residues-rich tracts occupy residues 256–279 (NKTTVQQEPLESGAKNKSTEQQQA) and 286–308 (STMTPQEQQQYWYRQHLLSLQQR). The segment covering 309–319 (TKVHLPGHKKG) has biased composition (basic residues). Residues 325 to 334 (DTPEPVKEEV) are compositionally biased toward basic and acidic residues. Pro residues-rich tracts occupy residues 349 to 368 (EEPPLPPPNEEVPPPLPPEE), 562 to 579 (PPVMPPSLPTSVPPPGMP), and 586 to 642 (GPPP…PQGI). The segment covering 643–663 (PPQLTAAPVPPASSSQSSQVP) has biased composition (low complexity). Residues 692-702 (AGPSEQVNSKA) show a composition bias toward polar residues. Position 735 is an N6-methyllysine (lysine 735). Serine 756 is subject to Phosphoserine. Basic and acidic residues predominate over residues 758–806 (RGPRFDGPRRFEDLGSRCEGPRPKGPRFEGNRPDGPRPRYEGHPAEGTK). Residue arginine 814 is modified to Omega-N-methylarginine. Polar residues-rich tracts occupy residues 820 to 835 (FYITPSTSLSPRQSGP) and 868 to 880 (DTSSNQQKNFKMQ). Serine 829 is subject to Phosphoserine. Arginine 831 is subject to Omega-N-methylarginine. Residue lysine 891 forms a Glycyl lysine isopeptide (Lys-Gly) (interchain with G-Cter in SUMO2) linkage. Disordered stretches follow at residues 895-1211 (AAQS…GRNA) and 1243-1351 (NRED…DDRW). Polar residues-rich tracts occupy residues 896–909 (AQSNENLSDSQQEP) and 923–933 (NWDQNVQSMET). Lysine 983 participates in a covalent cross-link: Glycyl lysine isopeptide (Lys-Gly) (interchain with G-Cter in SUMO1); alternate. Residue lysine 983 forms a Glycyl lysine isopeptide (Lys-Gly) (interchain with G-Cter in SUMO2); alternate linkage. Composition is skewed to basic and acidic residues over residues 994–1012 (NNQDKGLPRPDNRDNRLEG), 1027–1036 (RMEDTRDKGL), and 1053–1093 (KQED…REKV). Lysine 1053 is covalently cross-linked (Glycyl lysine isopeptide (Lys-Gly) (interchain with G-Cter in SUMO1); alternate). Lysine 1053 is covalently cross-linked (Glycyl lysine isopeptide (Lys-Gly) (interchain with G-Cter in SUMO2); alternate). Serine 1100 and serine 1119 each carry phosphoserine. 2 stretches are compositionally biased toward basic and acidic residues: residues 1129–1211 (GSRE…GRNA) and 1243–1264 (NREDRFSAPPSRSHDGDRRGPW). A compositionally biased stretch (acidic residues) spans 1266 to 1276 (DDWERDQDMDE). Residues 1277-1328 (DYNREMERDMDRDVDRISRPMDMYDRSLDNEWDRDYGRPLDEQESQFRERDI) show a composition bias toward basic and acidic residues. Residues 1330-1342 (SLPPLPPLPPLPP) show a composition bias toward pro residues. Serine 1402 is subject to Phosphoserine. 3 disordered regions span residues 1407–1438 (PSDVDRHSPMAEHMPSSHHSSEMMGSDASLDS), 1469–1573 (QKEQ…EQER), and 1602–1828 (IPSA…PPGR). A compositionally biased stretch (low complexity) spans 1417–1430 (AEHMPSSHHSSEMM). Over residues 1469 to 1480 (QKEQLQKMKDFG) the composition is skewed to basic and acidic residues. Pro residues predominate over residues 1505–1520 (MYPPPGSYRPPPPMGK). Residues 1521 to 1539 (PPGSIVRPSAPPARSSVPV) are compositionally biased toward low complexity. 2 stretches are compositionally biased toward pro residues: residues 1540–1562 (TRPPVPIPPPPPPPPLPPPPPVI) and 1606–1636 (PVLPPPPVHSSIPPPGPVPMGMPPMSKPPPV). A Glycyl lysine isopeptide (Lys-Gly) (interchain with G-Cter in SUMO2) cross-link involves residue lysine 1652. 4 stretches are compositionally biased toward basic and acidic residues: residues 1662–1696 (ITLRPDPLPERSTFETEHAGQRDRYDRERDREPYF), 1704–1774 (ADHR…DRPV), 1783–1793 (GERRTYPEERM), and 1809–1828 (RVEKKPESKNVDDILKPPGR). Residue lysine 1710 forms a Glycyl lysine isopeptide (Lys-Gly) (interchain with G-Cter in SUMO2) linkage. Residues 2096–2103 (KKRVRWAD) are involved in interaction with PPP1CA.

As to quaternary structure, interacts with PPP1CA and NCOA5. Forms a complex with ILF2, ILF3, KHDRBS1, RBMX, NCOA5 and PPP1CA. As to expression, expressed in neuronal, neuroblastoma and embryonic kidney cell lines (at protein level).

Its subcellular location is the nucleus. It localises to the nucleus speckle. Functionally, plays a role in the reduction of telomerase activity during differentiation of embryonic stem cells by binding to the core promoter of TERT and controlling its down-regulation. The chain is YLP motif-containing protein 1 (YLPM1) from Homo sapiens (Human).